The sequence spans 425 residues: D-amino acid dehydrogenase (425 aa).

3 to 17 is an FAD binding site; the sequence is VLVMGAGVIGVTTAY.

This sequence belongs to the DadA oxidoreductase family. The cofactor is FAD.

It carries out the reaction a D-alpha-amino acid + A + H2O = a 2-oxocarboxylate + AH2 + NH4(+). Its pathway is amino-acid degradation; D-alanine degradation; NH(3) and pyruvate from D-alanine: step 1/1. Functionally, oxidative deamination of D-amino acids. In Rhodopseudomonas palustris (strain HaA2), this protein is D-amino acid dehydrogenase.